A 913-amino-acid chain; its full sequence is Anoctamin-5 (913 aa).

Residues 1–299 lie on the Cytoplasmic side of the membrane; sequence MGDPDLLEVL…DLIKNYYGEK (299 aa). A helical transmembrane segment spans residues 300-320; the sequence is IGIYFVFLGFYTEMLFFAAVV. Residues 321-380 lie on the Extracellular side of the membrane; sequence GLACFIYGLLSMEHNTSSTEICDPEIGGQMIMCPLCDQVCDYWRLNSTCLASKFSHLFDN. Residues N335, N366, and N380 are each glycosylated (N-linked (GlcNAc...) asparagine). The chain crosses the membrane as a helical span at residues 381 to 401; that stretch reads ESTVFFAIFMGIWVTLFLEFW. Topologically, residues 402-462 are cytoplasmic; the sequence is KQRQARLEYE…YTRIPWYFLS (61 aa). Residues 463–483 traverse the membrane as a helical segment; sequence GATVTLWMSLVVTSMVAVIVY. Residues 484–511 are Extracellular-facing; the sequence is RLSVFATFASFMESDASLKQVKSFLTPQ. A helical membrane pass occupies residues 512–532; sequence ITTSLTGSCLNFIVILILNFF. Residues 533–557 lie on the Cytoplasmic side of the membrane; it reads YEKISAWITKMEIPRTYQEYESSLT. Residues 558–578 traverse the membrane as a helical segment; that stretch reads LKMFLFQFVNFYSSCFYVAFF. At 579–679 the chain is on the extracellular side; the sequence is KGKFVGYPGK…FYEYLETVTQ (101 aa). A helical transmembrane segment spans residues 680-700; that stretch reads FGFVTLFVASFPLAPLLALIN. The Cytoplasmic segment spans residues 701–732; sequence NIVEIRVDAWKLTTQYRRTVASKAHSIGVWQD. Residues 733–753 form a helical membrane-spanning segment; it reads ILYGMAVLSVATNAFIVAFTS. Residues 754–834 are Extracellular-facing; that stretch reads DIIPRLVYYY…FWHVLAAKMT (81 aa). N-linked (GlcNAc...) asparagine glycans are attached at residues N768, N778, and N791. The chain crosses the membrane as a helical span at residues 835-855; sequence FIIVMEHVVFLVKFLLAWMIP. The Cytoplasmic portion of the chain corresponds to 856–913; the sequence is DVPKDVVERIKREKLMTIKILHDFELNKLKENLGINSNEFAKHVMIEENKAQLAKSTL.

It belongs to the anoctamin family. As to expression, highly expressed in brain, heart, kidney, lung, and skeletal muscle. Weakly expressed in bone marrow, fetal liver, placenta, spleen, thymus, osteoblasts and periodontal ligament cells.

The protein resides in the endoplasmic reticulum membrane. It is found in the cell membrane. Its function is as follows. Plays a role in plasma membrane repair in a process involving annexins. Does not exhibit calcium-activated chloride channel (CaCC) activity. The chain is Anoctamin-5 (ANO5) from Homo sapiens (Human).